The following is a 232-amino-acid chain: Orotidine 5'-phosphate decarboxylase (232 aa).

Residues aspartate 13, lysine 35, 62-71 (DLKFHDIPNT), threonine 122, arginine 182, glutamine 191, glycine 211, and arginine 212 each bind substrate. Lysine 64 functions as the Proton donor in the catalytic mechanism.

It belongs to the OMP decarboxylase family. Type 1 subfamily. Homodimer.

It carries out the reaction orotidine 5'-phosphate + H(+) = UMP + CO2. It participates in pyrimidine metabolism; UMP biosynthesis via de novo pathway; UMP from orotate: step 2/2. In terms of biological role, catalyzes the decarboxylation of orotidine 5'-monophosphate (OMP) to uridine 5'-monophosphate (UMP). The protein is Orotidine 5'-phosphate decarboxylase of Pseudomonas savastanoi pv. phaseolicola (strain 1448A / Race 6) (Pseudomonas syringae pv. phaseolicola (strain 1448A / Race 6)).